The following is a 388-amino-acid chain: MSFITAFRERVFIASGDLIRTFRISEETELKNFISWSKINPERIQKPSFDIEKELKAVEKRVILCLAHSNVLTTHGRRLVAVGTNEKQIHVFEYFVNDKGDIVTAEHIVTSVVPKAPTAIVFDKEDAYVVVGDRAGDVHRFSVLNGSAIEMAGAISMILDVAFSPDGKRLLMADRDEKVRALRYPATSVIDSFFLGHTEYVKTLAVQDNDSLWSSGGDKNLYNWSIAKCSAPRRTLDLSQFDAPIRKISINLQHKKIAVIFEKIETVVIVDLNQESLQTTSVSIVGESQCLDIASTKDYFAVLGRSTVHLIDLNNMEQKFVPIDEELTITLTSTNDAIDNLFKNVTHNNQQEYEKRKADKFEQIEKKKRRLNEDINGDDGEGPGPSNS.

WD repeat units lie at residues valine 58–isoleucine 102, valine 112–methionine 151, glycine 153–phenylalanine 194, and glycine 196–arginine 234. A disordered region spans residues glutamate 365 to serine 388.

It belongs to the WD repeat TRM82 family. In terms of assembly, forms a heterodimer with the catalytic subunit.

It localises to the nucleus. It functions in the pathway tRNA modification; N(7)-methylguanine-tRNA biosynthesis. Its function is as follows. Required for the formation of N(7)-methylguanine at position 46 (m7G46) in tRNA. In the complex, it is required to stabilize and induce conformational changes of the catalytic subunit. The sequence is that of tRNA (guanine-N(7)-)-methyltransferase non-catalytic subunit from Caenorhabditis elegans.